The sequence spans 91 residues: Probable Fe(2+)-trafficking protein (91 aa).

Belongs to the Fe(2+)-trafficking protein family.

In terms of biological role, could be a mediator in iron transactions between iron acquisition and iron-requiring processes, such as synthesis and/or repair of Fe-S clusters in biosynthetic enzymes. The sequence is that of Probable Fe(2+)-trafficking protein from Mannheimia succiniciproducens (strain KCTC 0769BP / MBEL55E).